The primary structure comprises 319 residues: Cytochrome c biogenesis protein CcsA (319 aa).

7 helical membrane-spanning segments follow: residues 9–29 (ILTH…LITL), 44–64 (GVIG…AYSG), 71–91 (LYES…FPYL), 143–163 (MVLG…LLVI), 225–245 (IISL…VWAN), 259–273 (TWAF…IYLH), and 286–306 (AIVA…VNLL).

Belongs to the CcmF/CycK/Ccl1/NrfE/CcsA family. As to quaternary structure, may interact with Ccs1.

It localises to the plastid. It is found in the chloroplast thylakoid membrane. Its function is as follows. Required during biogenesis of c-type cytochromes (cytochrome c6 and cytochrome f) at the step of heme attachment. The polypeptide is Cytochrome c biogenesis protein CcsA (Oenothera argillicola (Appalachian evening primrose)).